The following is a 98-amino-acid chain: Large ribosomal subunit protein bL21 (98 aa).

The protein belongs to the bacterial ribosomal protein bL21 family. In terms of assembly, part of the 50S ribosomal subunit. Contacts protein L20.

This protein binds to 23S rRNA in the presence of protein L20. This Novosphingobium aromaticivorans (strain ATCC 700278 / DSM 12444 / CCUG 56034 / CIP 105152 / NBRC 16084 / F199) protein is Large ribosomal subunit protein bL21.